The primary structure comprises 496 residues: Genome polyprotein (496 aa).

Over 1 to 447 (SRCTHLENRD…HTVLGGAFNS (447 aa)) the chain is Extracellular. Intrachain disulfides connect Cys-3-Cys-30, Cys-60-Cys-116, Cys-60-Cys-121, Cys-74-Cys-105, Cys-92-Cys-116, and Cys-92-Cys-121. A fusion peptide region spans residues 98 to 111 (DRGWGNHCGLFGKG). Residue Asn-154 is glycosylated (N-linked (GlcNAc...) asparagine; by host). 2 disulfides stabilise this stretch: Cys-186-Cys-290 and Cys-307-Cys-338. The helical transmembrane segment at 448 to 468 (IFGGVGFLPKLLMGVALAWLG) threads the bilayer. Residues 469–479 (LNTRNPTMSIS) are Cytoplasmic-facing. A helical transmembrane segment spans residues 480 to 496 (FLLTGGLVLAMTLGVGA).

As to quaternary structure, homodimer; in the endoplasmic reticulum and Golgi. Post-translationally, N-glycosylated.

Its subcellular location is the virion membrane. The protein localises to the host endoplasmic reticulum membrane. Binds to host cell surface receptor and mediates fusion between viral and cellular membranes. Envelope protein is synthesized in the endoplasmic reticulum in the form of heterodimer with protein prM. They play a role in virion budding in the ER, and the newly formed immature particle is covered with 60 spikes composed of heterodimer between precursor prM and envelope protein E. The virion is transported to the Golgi apparatus where the low pH causes dissociation of PrM-E heterodimers and formation of E homodimers. prM-E cleavage is ineficient, and many virions are only partially matured. These uncleaved prM would play a role in immune evasion. This chain is Genome polyprotein, found in Louping ill virus (strain SB 526) (Li).